The chain runs to 171 residues: S-ribosylhomocysteine lyase (171 aa).

Fe cation contacts are provided by H54, H58, and C128.

The protein belongs to the LuxS family. As to quaternary structure, homodimer. It depends on Fe cation as a cofactor.

The catalysed reaction is S-(5-deoxy-D-ribos-5-yl)-L-homocysteine = (S)-4,5-dihydroxypentane-2,3-dione + L-homocysteine. Involved in the synthesis of autoinducer 2 (AI-2) which is secreted by bacteria and is used to communicate both the cell density and the metabolic potential of the environment. The regulation of gene expression in response to changes in cell density is called quorum sensing. Catalyzes the transformation of S-ribosylhomocysteine (RHC) to homocysteine (HC) and 4,5-dihydroxy-2,3-pentadione (DPD). This chain is S-ribosylhomocysteine lyase, found in Campylobacter concisus (strain 13826).